The primary structure comprises 347 residues: Quinolinate synthase (347 aa).

Residues histidine 47 and serine 68 each coordinate iminosuccinate. Cysteine 113 contributes to the [4Fe-4S] cluster binding site. Iminosuccinate is bound by residues 139–141 and serine 156; that span reads YAN. Cysteine 200 is a binding site for [4Fe-4S] cluster. Iminosuccinate is bound by residues 226–228 and threonine 243; that span reads HPE. Cysteine 297 lines the [4Fe-4S] cluster pocket.

This sequence belongs to the quinolinate synthase family. Type 1 subfamily. Requires [4Fe-4S] cluster as cofactor.

The protein resides in the cytoplasm. The enzyme catalyses iminosuccinate + dihydroxyacetone phosphate = quinolinate + phosphate + 2 H2O + H(+). It functions in the pathway cofactor biosynthesis; NAD(+) biosynthesis; quinolinate from iminoaspartate: step 1/1. In terms of biological role, catalyzes the condensation of iminoaspartate with dihydroxyacetone phosphate to form quinolinate. The chain is Quinolinate synthase from Escherichia coli O7:K1 (strain IAI39 / ExPEC).